We begin with the raw amino-acid sequence, 305 residues long: Sulfate adenylyltransferase subunit 2 (305 aa).

It belongs to the PAPS reductase family. CysD subfamily. Heterodimer composed of CysD, the smaller subunit, and CysN.

The catalysed reaction is sulfate + ATP + H(+) = adenosine 5'-phosphosulfate + diphosphate. It participates in sulfur metabolism; hydrogen sulfide biosynthesis; sulfite from sulfate: step 1/3. Its function is as follows. With CysN forms the ATP sulfurylase (ATPS) that catalyzes the adenylation of sulfate producing adenosine 5'-phosphosulfate (APS) and diphosphate, the first enzymatic step in sulfur assimilation pathway. APS synthesis involves the formation of a high-energy phosphoric-sulfuric acid anhydride bond driven by GTP hydrolysis by CysN coupled to ATP hydrolysis by CysD. The chain is Sulfate adenylyltransferase subunit 2 from Azotobacter vinelandii (strain DJ / ATCC BAA-1303).